A 236-amino-acid polypeptide reads, in one-letter code: Transcription repressor MYB6 (236 aa).

2 consecutive HTH myb-type domains span residues 9-61 (KAHT…INYL) and 62-116 (RPDL…KRKL). DNA-binding regions (H-T-H motif) lie at residues 37 to 61 (WRSL…INYL) and 89 to 112 (WSLI…NTHI). Residues 159–181 (PKTENSSDNGASTSGTTTDEDLR) are disordered. Over residues 162 to 175 (ENSSDNGASTSGTT) the composition is skewed to polar residues.

Interacts with BHLH012/MYC1 and BHLH042/TT8. Expressed in roots, stems, flower buds, and siliques.

It is found in the nucleus. The protein is Transcription repressor MYB6 (MYB6) of Arabidopsis thaliana (Mouse-ear cress).